Reading from the N-terminus, the 203-residue chain is Recombination protein RecR (203 aa).

Residues 56–71 (CAVCGNVSDEERCRIC) form a C4-type zinc finger. In terms of domain architecture, Toprim spans 79 to 179 (SLICVVEEPK…TVTRIASGLP (101 aa)).

This sequence belongs to the RecR family.

May play a role in DNA repair. It seems to be involved in an RecBC-independent recombinational process of DNA repair. It may act with RecF and RecO. The sequence is that of Recombination protein RecR from Mycolicibacterium vanbaalenii (strain DSM 7251 / JCM 13017 / BCRC 16820 / KCTC 9966 / NRRL B-24157 / PYR-1) (Mycobacterium vanbaalenii).